The sequence spans 1388 residues: Rho-associated protein kinase 2 (1388 aa).

The segment at Met1–Gln27 is disordered. Residues Tyr92–Phe354 form the Protein kinase domain. ATP contacts are provided by residues Ile98–Val106 and Lys121. Asp214 functions as the Proton acceptor in the catalytic mechanism. The 69-residue stretch at Asp357–Ser425 folds into the AGC-kinase C-terminal domain. The interval Asn363–Val784 is interaction with PPP1R12A. Positions Pro373–Leu420 are interaction with NPM1. Thr414 is subject to Phosphothreonine; by ROCK2. 2 coiled-coil regions span residues Arg429 to Leu1024 and Asp1053 to Asp1131. The 77-residue stretch at Ala497–Thr573 folds into the REM-1 domain. A Phosphotyrosine; by SRC modification is found at Tyr722. A RhoBD domain is found at Thr979–Pro1047. An RHOA binding region spans residues Thr979–Pro1047. The residue at position 1137 (Ser1137) is a Phosphoserine. Residues Glu1150–Pro1349 form the PH domain. Residue Thr1212 is modified to Phosphothreonine. The Phorbol-ester/DAG-type zinc-finger motif lies at Gly1260–Cys1315. The interval Val1345 to Ser1388 is disordered. 2 positions are modified to phosphoserine: Ser1362 and Ser1374. Over residues Ser1362–Arg1376 the composition is skewed to polar residues.

Belongs to the protein kinase superfamily. AGC Ser/Thr protein kinase family. Homodimer. Interacts with IRS1. Interacts with RAF1. Interacts with RHOA (activated by GTP), RHOB and RHOC. Interacts with PPP1R12A. Interacts with EP300. Interacts with CHORDC1. Interacts with BRCA2. Interacts with NPM1; this interaction enhances ROCK2 activity. Interacts with SORL1. Interacts with PJVK. It depends on Mg(2+) as a cofactor. Phosphorylation at Tyr-722 reduces its binding to RHOA and is crucial for focal adhesion dynamics. Dephosphorylation by PTPN11 stimulates its RHOA binding activity. In terms of processing, cleaved by granzyme B during apoptosis. This leads to constitutive activation of the kinase and membrane blebbing. As to expression, expressed in the brain (at protein level).

Its subcellular location is the cytoplasm. It is found in the cell membrane. It localises to the nucleus. The protein resides in the cytoskeleton. The protein localises to the microtubule organizing center. Its subcellular location is the centrosome. The catalysed reaction is L-seryl-[protein] + ATP = O-phospho-L-seryl-[protein] + ADP + H(+). It catalyses the reaction L-threonyl-[protein] + ATP = O-phospho-L-threonyl-[protein] + ADP + H(+). Activated by RHOA binding. Inhibited by Y-27632. In terms of biological role, protein kinase which is a key regulator of actin cytoskeleton and cell polarity. Involved in regulation of smooth muscle contraction, actin cytoskeleton organization, stress fiber and focal adhesion formation, neurite retraction, cell adhesion and motility via phosphorylation of ADD1, BRCA2, CNN1, EZR, DPYSL2, EP300, MSN, MYL9/MLC2, NPM1, RDX, PPP1R12A and VIM. Phosphorylates SORL1 and IRF4. Acts as a negative regulator of VEGF-induced angiogenic endothelial cell activation. Positively regulates the activation of p42/MAPK1-p44/MAPK3 and of p90RSK/RPS6KA1 during myogenic differentiation. Plays an important role in the timely initiation of centrosome duplication. Inhibits keratinocyte terminal differentiation. May regulate closure of the eyelids and ventral body wall through organization of actomyosin bundles. Plays a critical role in the regulation of spine and synaptic properties in the hippocampus. Plays an important role in generating the circadian rhythm of the aortic myofilament Ca(2+) sensitivity and vascular contractility by modulating the myosin light chain phosphorylation. This is Rho-associated protein kinase 2 (ROCK2) from Homo sapiens (Human).